A 499-amino-acid polypeptide reads, in one-letter code: Rhodopsin, GQ-coupled (499 aa).

At 1 to 50 (MADNKSTLPGLPDINGTLNRSMTPNTGWEGPYDMSVHLHWTQFPPVTEEW) the chain is on the extracellular side. N-linked (GlcNAc...) asparagine glycosylation is found at Asn4, Asn15, and Asn19. The chain crosses the membrane as a helical span at residues 51 to 75 (HYIIGVYITIVGLLGIMGNTTVVYI). Residues 76-87 (FSNTKSLRSPSN) lie on the Cytoplasmic side of the membrane. A helical membrane pass occupies residues 88 to 114 (LFVVNLAVSDLIFSAVNGFPLLTVSSF). Residues 115–128 (HQKWIFGSLFCQLY) are Extracellular-facing. A disulfide bond links Cys125 and Cys203. The chain crosses the membrane as a helical span at residues 129-148 (GFVGGVFGLMSINTLTAISI). Residues 149–168 (DRYVVITKPLQASQTMTRRK) are Cytoplasmic-facing. Residues 169 to 192 (VHLMIVIVWVLSILLSIPPFFGWG) form a helical membrane-spanning segment. Residues 193–216 (AYIPEGFQTSCTFDYLTKTARTRT) lie on the Extracellular side of the membrane. Residues 217–244 (YIVVLYLFGFLIPLIIIGVCYVLIIRGV) form a helical membrane-spanning segment. Residues 245-278 (RRHDQKMLTITRSMKTEDARANNKRARSELRISK) are Cytoplasmic-facing. A helical transmembrane segment spans residues 279–302 (IAMTVTCLFIISWSPYAIIALIAQ). The Extracellular portion of the chain corresponds to 303-310 (FGPAHWIT). Residues 311–335 (PLVSELPMMLAKSSSMHNPVVYALS) traverse the membrane as a helical segment. Residue Lys322 is modified to N6-(retinylidene)lysine. Residues 336-499 (HPKFRKALYQ…QRVNGLTFNS (164 aa)) are Cytoplasmic-facing. 2 S-palmitoyl cysteine lipidation sites follow: Cys353 and Cys354.

It belongs to the G-protein coupled receptor 1 family. Opsin subfamily. Phosphorylated on some or all of the serine and threonine residues present in the C-terminal region. Retina. Expressed in the depolarizing cell layer of the photoreceptor cells distant from the lens.

It localises to the membrane. Its function is as follows. Visual pigments such as rhodopsin and porphyropsin are light-absorbing molecules that mediate vision. Rhodopsin consists of an apoprotein, opsin, covalently linked to 11-cis-retinal. This receptor is coupled to the activation of phospholipase C. Porphyropsin consists of opsin covalently linked to 11-cis 3,4-didehydroretinal. The polypeptide is Rhodopsin, GQ-coupled (SCOP1) (Mizuhopecten yessoensis (Japanese scallop)).